The primary structure comprises 117 residues: Large ribosomal subunit protein bL19 (117 aa).

It belongs to the bacterial ribosomal protein bL19 family.

This protein is located at the 30S-50S ribosomal subunit interface and may play a role in the structure and function of the aminoacyl-tRNA binding site. This chain is Large ribosomal subunit protein bL19, found in Kineococcus radiotolerans (strain ATCC BAA-149 / DSM 14245 / SRS30216).